The sequence spans 367 residues: UDP-N-acetylglucosamine--N-acetylmuramyl-(pentapeptide) pyrophosphoryl-undecaprenol N-acetylglucosamine transferase (367 aa).

Residues 15–17, N127, R163, S191, I249, and Q294 each bind UDP-N-acetyl-alpha-D-glucosamine; that span reads TGG.

It belongs to the glycosyltransferase 28 family. MurG subfamily.

The protein resides in the cell inner membrane. The catalysed reaction is di-trans,octa-cis-undecaprenyl diphospho-N-acetyl-alpha-D-muramoyl-L-alanyl-D-glutamyl-meso-2,6-diaminopimeloyl-D-alanyl-D-alanine + UDP-N-acetyl-alpha-D-glucosamine = di-trans,octa-cis-undecaprenyl diphospho-[N-acetyl-alpha-D-glucosaminyl-(1-&gt;4)]-N-acetyl-alpha-D-muramoyl-L-alanyl-D-glutamyl-meso-2,6-diaminopimeloyl-D-alanyl-D-alanine + UDP + H(+). It participates in cell wall biogenesis; peptidoglycan biosynthesis. Cell wall formation. Catalyzes the transfer of a GlcNAc subunit on undecaprenyl-pyrophosphoryl-MurNAc-pentapeptide (lipid intermediate I) to form undecaprenyl-pyrophosphoryl-MurNAc-(pentapeptide)GlcNAc (lipid intermediate II). This is UDP-N-acetylglucosamine--N-acetylmuramyl-(pentapeptide) pyrophosphoryl-undecaprenol N-acetylglucosamine transferase from Burkholderia lata (strain ATCC 17760 / DSM 23089 / LMG 22485 / NCIMB 9086 / R18194 / 383).